Consider the following 365-residue polypeptide: Probable caffeine synthase 5 (365 aa).

Position 18 (Tyr-18) interacts with S-adenosyl-L-homocysteine. Thr-25 serves as a coordination point for caffeine. Residues Cys-61, Asn-66, Asp-98, Leu-99, Ser-134, and Phe-135 each contribute to the S-adenosyl-L-homocysteine site. 3 residues coordinate caffeine: Tyr-152, His-155, and Trp-156. Residues Asn-173, Asp-259, Phe-261, and Asn-262 each contribute to the Mg(2+) site. Caffeine is bound at residue Phe-317.

This sequence belongs to the methyltransferase superfamily. Type-7 methyltransferase family. The cofactor is Mg(2+).

It functions in the pathway alkaloid biosynthesis. In terms of biological role, may be involved in the biosynthesis of caffeine. This Camellia sinensis (Tea plant) protein is Probable caffeine synthase 5.